Here is a 734-residue protein sequence, read N- to C-terminus: Photosystem I P700 chlorophyll a apoprotein A2 (734 aa).

The next 8 membrane-spanning stretches (helical) occupy residues 46 to 69 (IFAS…FHVA), 135 to 158 (LYTG…LHLQ), 175 to 199 (LNHH…HVAI), 273 to 291 (IAHH…GHMY), 330 to 353 (LHFQ…QHMY), 369 to 395 (AALY…IFFI), 417 to 439 (AIIS…LYIH), and 517 to 535 (FLVH…LILV). [4Fe-4S] cluster contacts are provided by cysteine 559 and cysteine 568. The next 2 helical transmembrane spans lie at 575–596 (AFYL…YWHW) and 643–665 (LSVW…MFLI). 3 residues coordinate chlorophyll a: histidine 654, methionine 662, and tyrosine 670. A phylloquinone-binding site is contributed by tryptophan 671. A helical membrane pass occupies residues 707 to 727 (FVGLAHFSVGYIFTYAAFLIA).

The protein belongs to the PsaA/PsaB family. In terms of assembly, the PsaA/B heterodimer binds the P700 chlorophyll special pair and subsequent electron acceptors. PSI consists of a core antenna complex that captures photons, and an electron transfer chain that converts photonic excitation into a charge separation. The eukaryotic PSI reaction center is composed of at least 11 subunits. P700 is a chlorophyll a/chlorophyll a' dimer, A0 is one or more chlorophyll a, A1 is one or both phylloquinones and FX is a shared 4Fe-4S iron-sulfur center. serves as cofactor.

The protein resides in the plastid membrane. The catalysed reaction is reduced [plastocyanin] + hnu + oxidized [2Fe-2S]-[ferredoxin] = oxidized [plastocyanin] + reduced [2Fe-2S]-[ferredoxin]. Functionally, psaA and PsaB bind P700, the primary electron donor of photosystem I (PSI), as well as the electron acceptors A0, A1 and FX. PSI is a plastocyanin-ferredoxin oxidoreductase, converting photonic excitation into a charge separation, which transfers an electron from the donor P700 chlorophyll pair to the spectroscopically characterized acceptors A0, A1, FX, FA and FB in turn. Oxidized P700 is reduced on the lumenal side of the thylakoid membrane by plastocyanin. The sequence is that of Photosystem I P700 chlorophyll a apoprotein A2 from Cuscuta sandwichiana (Kauna'oa).